The primary structure comprises 601 residues: NADH-quinone oxidoreductase subunit C/D (601 aa).

Residues 1 to 191 form an NADH dehydrogenase I subunit C region; it reads MKLTRDFPHN…DPFMLDAAKQ (191 aa). The segment at 215–601 is NADH dehydrogenase I subunit D; that stretch reads DYMFLNLGPN…IDFVMSDVDR (387 aa).

It in the N-terminal section; belongs to the complex I 30 kDa subunit family. This sequence in the C-terminal section; belongs to the complex I 49 kDa subunit family. In terms of assembly, NDH-1 is composed of 13 different subunits. Subunits NuoB, CD, E, F, and G constitute the peripheral sector of the complex.

It localises to the cell inner membrane. The enzyme catalyses a quinone + NADH + 5 H(+)(in) = a quinol + NAD(+) + 4 H(+)(out). Its function is as follows. NDH-1 shuttles electrons from NADH, via FMN and iron-sulfur (Fe-S) centers, to quinones in the respiratory chain. The immediate electron acceptor for the enzyme in this species is believed to be ubiquinone. Couples the redox reaction to proton translocation (for every two electrons transferred, four hydrogen ions are translocated across the cytoplasmic membrane), and thus conserves the redox energy in a proton gradient. The sequence is that of NADH-quinone oxidoreductase subunit C/D from Shewanella oneidensis (strain ATCC 700550 / JCM 31522 / CIP 106686 / LMG 19005 / NCIMB 14063 / MR-1).